The chain runs to 426 residues: Glutamate-1-semialdehyde 2,1-aminomutase (426 aa).

Lysine 265 carries the N6-(pyridoxal phosphate)lysine modification.

It belongs to the class-III pyridoxal-phosphate-dependent aminotransferase family. HemL subfamily. As to quaternary structure, homodimer. The cofactor is pyridoxal 5'-phosphate.

The protein resides in the cytoplasm. It carries out the reaction (S)-4-amino-5-oxopentanoate = 5-aminolevulinate. Its pathway is porphyrin-containing compound metabolism; protoporphyrin-IX biosynthesis; 5-aminolevulinate from L-glutamyl-tRNA(Glu): step 2/2. The chain is Glutamate-1-semialdehyde 2,1-aminomutase from Marinobacter nauticus (strain ATCC 700491 / DSM 11845 / VT8) (Marinobacter aquaeolei).